Consider the following 210-residue polypeptide: MEFSTADFERLIMFEHARKNSEAQYKNDPLDSENLLKWGGALLELSQFQPIPEAKLMLNDAISKLEEALTINPGKHQALWCIANAYTAHAFYVHDPEEAKEHFDKATEYFQRAENEDPGNDTYRKSLDSSLKAPELHMQFMNQGMGQQILGGGGGGGGGGMASSNVSQSSKKKKRNTEFTYDVCGWIILACGIVAWVGMAKSLGPPPPAR.

Methionine 1 bears the N-acetylmethionine mark. The Cytoplasmic portion of the chain corresponds to 1-178 (MEFSTADFER…SSKKKKRNTE (178 aa)). TPR repeat units lie at residues 42 to 75 (LLELSQFQPIPEAKLMLNDAISKLEEALTINPGK) and 83 to 120 (ANAYTAHAFYVHDPEEAKEHFDKATEYFQRAENEDPGN). A compositionally biased stretch (gly residues) spans 151–161 (GGGGGGGGGGM). Residues 151-172 (GGGGGGGGGGMASSNVSQSSKK) are disordered. Residues 179-199 (FTYDVCGWIILACGIVAWVGM) form a helical membrane-spanning segment. Over 200–210 (AKSLGPPPPAR) the chain is Mitochondrial intermembrane.

Belongs to the Tom20 family. In terms of assembly, forms part of the preprotein translocase complex of the outer mitochondrial membrane (TOM complex) which consists of at least 6 different proteins (TOM5, TOM6, TOM7, TOM20, TOM22/TOM9 and TOM40). Component of a mitochondrial large protein complex that contains, at least, MIC60, DGS1, TOM40, TOM20 proteins, and petC/RISP. Post-translationally, the N-terminus is blocked. As to expression, expressed in roots, flowers, young cotyledons and leaves.

The protein localises to the mitochondrion outer membrane. In terms of biological role, central component of the receptor complex responsible for the recognition and translocation of cytosolically synthesized mitochondrial preproteins. Together with TOM22 functions as the transit peptide receptor at the surface of the mitochondrion outer membrane and facilitates the movement of preproteins into the translocation pore. The protein is Mitochondrial import receptor subunit TOM20-2 of Arabidopsis thaliana (Mouse-ear cress).